The sequence spans 179 residues: Cytochrome b6-f complex iron-sulfur subunit (179 aa).

The chain crosses the membrane as a helical span at residues 21 to 43 (LLTFGSVTGVALGALYPVVNYFI). Residues 61-162 (GNDVVLSKFL…VSVTDDKVFL (102 aa)) form the Rieske domain. 4 residues coordinate [2Fe-2S] cluster: cysteine 108, histidine 110, cysteine 126, and histidine 129. Residues cysteine 113 and cysteine 128 are joined by a disulfide bond.

It belongs to the Rieske iron-sulfur protein family. In terms of assembly, the 4 large subunits of the cytochrome b6-f complex are cytochrome b6, subunit IV (17 kDa polypeptide, PetD), cytochrome f and the Rieske protein, while the 4 small subunits are PetG, PetL, PetM and PetN. The complex functions as a dimer. [2Fe-2S] cluster serves as cofactor.

It is found in the cellular thylakoid membrane. The catalysed reaction is 2 oxidized [plastocyanin] + a plastoquinol + 2 H(+)(in) = 2 reduced [plastocyanin] + a plastoquinone + 4 H(+)(out). Functionally, component of the cytochrome b6-f complex, which mediates electron transfer between photosystem II (PSII) and photosystem I (PSI), cyclic electron flow around PSI, and state transitions. The polypeptide is Cytochrome b6-f complex iron-sulfur subunit (Synechococcus elongatus (strain ATCC 33912 / PCC 7942 / FACHB-805) (Anacystis nidulans R2)).